Reading from the N-terminus, the 122-residue chain is Acidic phospholipase A2 BlatPLA2 (122 aa).

7 disulfides stabilise this stretch: Cys26-Cys115, Cys28-Cys44, Cys43-Cys95, Cys49-Cys122, Cys50-Cys88, Cys57-Cys81, and Cys75-Cys86. Ca(2+) contacts are provided by Tyr27, Gly29, and Gly31. His47 is a catalytic residue. Residue Asp48 participates in Ca(2+) binding. The active site involves Asp89.

Belongs to the phospholipase A2 family. Group II subfamily. D49 sub-subfamily. As to quaternary structure, monomer. It depends on Ca(2+) as a cofactor. Expressed by the venom gland.

It localises to the secreted. The catalysed reaction is a 1,2-diacyl-sn-glycero-3-phosphocholine + H2O = a 1-acyl-sn-glycero-3-phosphocholine + a fatty acid + H(+). Its function is as follows. Acidic phospholipase A2 (PLA2) that only causes a mild edema, when subcutaneously injected in the mice foot. PLA2 catalyzes the calcium-dependent hydrolysis of the 2-acyl groups in 3-sn-phosphoglycerides. The chain is Acidic phospholipase A2 BlatPLA2 from Bothriechis lateralis (Side-striped palm pitviper).